The primary structure comprises 265 residues: Putative 2-aminoethylphosphonate transport system permease protein PhnV (265 aa).

6 helical membrane passes run 13–33 (GVVASVLFIVFFFLPLAVILM), 69–89 (LTIGFCASLFALLCGVWAALA), 104–124 (VFYLPSAIPSVSVGLGILVAF), 131–151 (MNGTLWIVLTAHFVLISAFTF), 185–205 (LPLLMPWMMSALALSLSLSMG), and 233–253 (NIADGAALTIVLVAITLLLMM). The region spanning 65-253 (LLASLTIGFC…LVAITLLLMM (189 aa)) is the ABC transmembrane type-1 domain.

Belongs to the binding-protein-dependent transport system permease family.

The protein resides in the cell inner membrane. Its function is as follows. Probably part of the PhnSTUV complex (TC 3.A.1.11.5) involved in 2-aminoethylphosphonate import. Probably responsible for the translocation of the substrate across the membrane. This chain is Putative 2-aminoethylphosphonate transport system permease protein PhnV (phnV), found in Salmonella typhimurium (strain LT2 / SGSC1412 / ATCC 700720).